We begin with the raw amino-acid sequence, 655 residues long: Tumor necrosis factor receptor superfamily member 21 (655 aa).

A signal peptide spans 1 to 41; it reads MGTRASSITALASCSRTAGQVGATMVAGSLLLLGFLSTITA. Over 42–349 the chain is Extracellular; sequence QPEQKTLSLP…AHKHFDINEH (308 aa). TNFR-Cys repeat units lie at residues 50-88, 90-131, 133-167, and 170-211; these read LPGT…LRVC, SCPA…DREC, CPPG…EDVR, and QCAR…DNVC. Cystine bridges form between cysteine 67-cysteine 80, cysteine 70-cysteine 88, cysteine 91-cysteine 106, cysteine 109-cysteine 123, cysteine 113-cysteine 131, cysteine 133-cysteine 144, cysteine 150-cysteine 168, cysteine 171-cysteine 186, and cysteine 192-cysteine 211. The N-linked (GlcNAc...) asparagine glycan is linked to asparagine 82. N-linked (GlcNAc...) asparagine glycosylation is present at asparagine 141. Disordered regions lie at residues 222–305 and 318–339; these read PPSS…QAPH and EATG…PRQN. 2 stretches are compositionally biased toward polar residues: residues 241-262 and 276-302; these read VPSS…TASV and PDNT…THQQ. Asparagine 252, asparagine 257, asparagine 278, and asparagine 289 each carry an N-linked (GlcNAc...) asparagine glycan. The segment covering 330–339 has biased composition (basic residues); sequence APKRGHPRQN. The helical transmembrane segment at 350–370 threads the bilayer; sequence LPWMIVLFLLLVLVLIVVCSI. Cysteine 368 carries S-palmitoyl cysteine lipidation. Residues 371–655 are Cytoplasmic-facing; the sequence is RKSSRTLKKG…SVYSHLPDLL (285 aa). In terms of domain architecture, Death spans 415-498; sequence GIDILKLVAA…DVVEKIRGLM (84 aa).

In terms of assembly, associates with TRADD. Interacts with NGFR. Interacts with CASP8. Post-translationally, oxidized in response to reactive oxygen species (ROS), leading to endocytosis. In terms of tissue distribution, detected in spleen B-cells (at protein level). Ubiquitous. Highly expressed in adult spleen, thymus, testis, prostate, ovary, small intestine, colon, brain, lung and kidney, and in fetal brain, liver and lung. Detected at lower levels in adult peripheral blood leukocytes, lung, and in fetal muscle, heart, kidney, small intestine and skin. Detected in T-cells, B-cells and monocytes. In T-cells expression is highest in Th0 cells, intermediate in Th2 cells and lower in Th1 cells. Expressed at low levels in proliferating progenitors in the spinal cord, but is highly expressed by differentiating neurons within the spinal cord and adjacent dorsal root ganglia.

The protein resides in the cell membrane. Promotes apoptosis, possibly via a pathway that involves the activation of NF-kappa-B. Can also promote apoptosis mediated by BAX and by the release of cytochrome c from the mitochondria into the cytoplasm. Trophic-factor deprivation triggers the cleavage of surface APP by beta-secretase to release sAPP-beta which is further cleaved to release an N-terminal fragment of APP (N-APP). Negatively regulates oligodendrocyte survival, maturation and myelination. Plays a role in signaling cascades triggered by stimulation of T-cell receptors, in the adaptive immune response and in the regulation of T-cell differentiation and proliferation. Negatively regulates T-cell responses and the release of cytokines such as IL4, IL5, IL10, IL13 and IFNG by Th2 cells. Negatively regulates the production of IgG, IgM and IgM in response to antigens. May inhibit the activation of JNK in response to T-cell stimulation. Also acts as a regulator of pyroptosis: recruits CASP8 in response to reactive oxygen species (ROS) and subsequent oxidation, leading to activation of GSDMC. The chain is Tumor necrosis factor receptor superfamily member 21 (Tnfrsf21) from Mus musculus (Mouse).